The sequence spans 293 residues: 4-hydroxy-tetrahydrodipicolinate synthase (293 aa).

Thr-47 contributes to the pyruvate binding site. Tyr-135 (proton donor/acceptor) is an active-site residue. The active-site Schiff-base intermediate with substrate is Lys-163. Ile-204 lines the pyruvate pocket.

It belongs to the DapA family. In terms of assembly, homotetramer; dimer of dimers.

It localises to the cytoplasm. It catalyses the reaction L-aspartate 4-semialdehyde + pyruvate = (2S,4S)-4-hydroxy-2,3,4,5-tetrahydrodipicolinate + H2O + H(+). It functions in the pathway amino-acid biosynthesis; L-lysine biosynthesis via DAP pathway; (S)-tetrahydrodipicolinate from L-aspartate: step 3/4. In terms of biological role, catalyzes the condensation of (S)-aspartate-beta-semialdehyde [(S)-ASA] and pyruvate to 4-hydroxy-tetrahydrodipicolinate (HTPA). The polypeptide is 4-hydroxy-tetrahydrodipicolinate synthase (Brachyspira hyodysenteriae (strain ATCC 49526 / WA1)).